A 111-amino-acid polypeptide reads, in one-letter code: UPF0145 protein BMA10229_A0446 (111 aa).

This sequence belongs to the UPF0145 family.

The polypeptide is UPF0145 protein BMA10229_A0446 (Burkholderia mallei (strain NCTC 10229)).